Reading from the N-terminus, the 437-residue chain is Protein arginine methyltransferase NDUFAF7, mitochondrial (437 aa).

The transit peptide at 1 to 42 (MSGLARLQRLQKFGFLMVSASANRPIQRYQCSRTEKPQKRTS) directs the protein to the mitochondrion.

The protein belongs to the NDUFAF7 family.

The protein localises to the mitochondrion. It carries out the reaction L-arginyl-[protein] + 2 S-adenosyl-L-methionine = N(omega),N(omega)'-dimethyl-L-arginyl-[protein] + 2 S-adenosyl-L-homocysteine + 2 H(+). In terms of biological role, arginine methyltransferase involved in the assembly or stability of mitochondrial NADH:ubiquinone oxidoreductase complex (complex I). Acts by mediating symmetric dimethylation of 'Arg-118' of ndufs2 after it assembles into the complex I, stabilizing the early intermediate complex. This Xenopus laevis (African clawed frog) protein is Protein arginine methyltransferase NDUFAF7, mitochondrial.